The sequence spans 741 residues: Polyribonucleotide nucleotidyltransferase (741 aa).

Residues aspartate 489 and aspartate 495 each coordinate Mg(2+). The 60-residue stretch at 556–615 (PKIDSIQIPVDKIKVVIGKGGETIDKIIAETGVTIDIDEEGLVQIFSSDQDAIDRAKTII) folds into the KH domain. One can recognise an S1 motif domain in the interval 625–693 (GEVYTVPVVR…EKGRVDASIK (69 aa)). Residues 695–741 (LLPKPEKNEDGENGEEHRHCCCSHHKPDHHNESVEAPKKSDESETKE) form a disordered region. 2 stretches are compositionally biased toward basic and acidic residues: residues 698–713 (KPEK…EHRH) and 723–741 (HHNE…ETKE).

The protein belongs to the polyribonucleotide nucleotidyltransferase family. Mg(2+) serves as cofactor.

The protein resides in the cytoplasm. The enzyme catalyses RNA(n+1) + phosphate = RNA(n) + a ribonucleoside 5'-diphosphate. Its function is as follows. Involved in mRNA degradation. Catalyzes the phosphorolysis of single-stranded polyribonucleotides processively in the 3'- to 5'-direction. The sequence is that of Polyribonucleotide nucleotidyltransferase from Streptococcus thermophilus (strain CNRZ 1066).